Reading from the N-terminus, the 1146-residue chain is Myosin heavy chain kinase A (1146 aa).

The tract at residues 1–25 (MFNIKKRKESITGIPPINVNSPQSV) is disordered. Residues 100 to 120 (EQMEDQLEKTMKVVRNHTDSL) adopt a coiled-coil conformation. Positions 158–191 (IQEKKSTSSPLVKGGISGGGGSGGDDSFDGANIS) are disordered. Residues 172-181 (GISGGGGSGG) are compositionally biased toward gly residues. Coiled coils occupy residues 187-241 (GANI…KRIE) and 297-502 (SKIE…ASIS). The pseudosubstrate/autoinhibitory domain stretch occupies residues 500–551 (SISPISSVPKSPITTKRSSIILNSPPMTSQQSSPKIQDLLSSSGSSSVSGIN). The segment covering 521 to 534 (LNSPPMTSQQSSPK) has biased composition (polar residues). The disordered stretch occupies residues 521–540 (LNSPPMTSQQSSPKIQDLLS). Residues 552 to 852 (ISSETGEMGI…KVGAKQLPKA (301 aa)) form a catalytic region. The region spanning 564 to 808 (EFDPIINKWI…VCALLDLDVK (245 aa)) is the Alpha-type protein kinase domain. Residue 778–783 (GLGNLG) coordinates ATP. 7 WD repeats span residues 867–897 (SFRERVNSIAFFDNQKLLCAGYGDGTYRVFD), 910–938 (GHRKSIESIACNSNYIFTSSPDNTIKVHI), 952–980 (GHTGEVNCVVANEKYLFSCSYDKTIKVWD), 993–1021 (VHTKYIKTLALSGRYLFSGGNDQIIYVWD), 1033–1061 (GHEDWVLSLHCTASYLFSTSKDNVIKIWD), 1073–1101 (GHWNSVSSCVVKDRYLYSGSEDNSIKVWD), and 1114–1142 (SHSLGVKCLMVFNNQIISAAFDGSIKVWE).

Belongs to the protein kinase superfamily. Alpha-type protein kinase family. ALPK subfamily. In terms of assembly, oligomer. Mg(2+) serves as cofactor. It depends on Mn(2+) as a cofactor. The N-terminus is blocked.

It carries out the reaction L-threonyl-[myosin heavy-chain] + ATP = O-phospho-L-threonyl-[myosin heavy-chain] + ADP + H(+). Its function is as follows. Catalyzes its autophosphorylation, which is needed for enzymatic activity and phosphorylates myosin II heavy chain at a threonine in the C-terminal tail region. This phosphorylation is critical for regulating the assembly and disassembly of myosin II filament, affecting myosin localization during an array of cellular contractile events, including cytokinesis and capping of cell surface receptors as well as chemotactic cell locomotion. This chain is Myosin heavy chain kinase A (mhkA), found in Dictyostelium discoideum (Social amoeba).